The primary structure comprises 184 residues: Translation initiation factor IF-3 (184 aa).

The protein belongs to the IF-3 family. Monomer.

It localises to the cytoplasm. Its function is as follows. IF-3 binds to the 30S ribosomal subunit and shifts the equilibrium between 70S ribosomes and their 50S and 30S subunits in favor of the free subunits, thus enhancing the availability of 30S subunits on which protein synthesis initiation begins. This Hamiltonella defensa subsp. Acyrthosiphon pisum (strain 5AT) protein is Translation initiation factor IF-3.